The sequence spans 272 residues: Putative hydro-lyase Rpal_1947 (272 aa).

It belongs to the D-glutamate cyclase family.

This chain is Putative hydro-lyase Rpal_1947, found in Rhodopseudomonas palustris (strain TIE-1).